Consider the following 132-residue polypeptide: Ribosome-binding factor A (132 aa).

Belongs to the RbfA family. In terms of assembly, monomer. Binds 30S ribosomal subunits, but not 50S ribosomal subunits or 70S ribosomes.

The protein resides in the cytoplasm. One of several proteins that assist in the late maturation steps of the functional core of the 30S ribosomal subunit. Associates with free 30S ribosomal subunits (but not with 30S subunits that are part of 70S ribosomes or polysomes). Required for efficient processing of 16S rRNA. May interact with the 5'-terminal helix region of 16S rRNA. This is Ribosome-binding factor A from Prochlorococcus marinus (strain MIT 9515).